The sequence spans 369 residues: Mitogen-activated protein kinase 11 (369 aa).

Positions 40-326 constitute a Protein kinase domain; the sequence is VPPLRPIGRG…VDEALCHPYL (287 aa). Residues 46-54 and Lys69 each bind ATP; that span reads IGRGASGIV. The Proton acceptor role is filled by Asp166. Thr198 is modified (phosphothreonine). The TXY signature appears at 198–200; the sequence is TEY. Phosphotyrosine is present on Tyr200. A Phosphothreonine modification is found at Thr203.

This sequence belongs to the protein kinase superfamily. CMGC Ser/Thr protein kinase family. MAP kinase subfamily. Interacts with MKK1, MKK2 and MKK6. In terms of processing, dually phosphorylated on Thr-198 and Tyr-200, which activates the enzyme.

It catalyses the reaction L-seryl-[protein] + ATP = O-phospho-L-seryl-[protein] + ADP + H(+). The catalysed reaction is L-threonyl-[protein] + ATP = O-phospho-L-threonyl-[protein] + ADP + H(+). Its activity is regulated as follows. Activated by threonine and tyrosine phosphorylation. This Arabidopsis thaliana (Mouse-ear cress) protein is Mitogen-activated protein kinase 11 (MPK11).